Reading from the N-terminus, the 103-residue chain is Pyrimidine/purine nucleoside phosphorylase (103 aa).

This sequence belongs to the nucleoside phosphorylase PpnP family.

The catalysed reaction is a purine D-ribonucleoside + phosphate = a purine nucleobase + alpha-D-ribose 1-phosphate. The enzyme catalyses adenosine + phosphate = alpha-D-ribose 1-phosphate + adenine. It catalyses the reaction cytidine + phosphate = cytosine + alpha-D-ribose 1-phosphate. It carries out the reaction guanosine + phosphate = alpha-D-ribose 1-phosphate + guanine. The catalysed reaction is inosine + phosphate = alpha-D-ribose 1-phosphate + hypoxanthine. The enzyme catalyses thymidine + phosphate = 2-deoxy-alpha-D-ribose 1-phosphate + thymine. It catalyses the reaction uridine + phosphate = alpha-D-ribose 1-phosphate + uracil. It carries out the reaction xanthosine + phosphate = alpha-D-ribose 1-phosphate + xanthine. In terms of biological role, catalyzes the phosphorolysis of diverse nucleosides, yielding D-ribose 1-phosphate and the respective free bases. Can use uridine, adenosine, guanosine, cytidine, thymidine, inosine and xanthosine as substrates. Also catalyzes the reverse reactions. The protein is Pyrimidine/purine nucleoside phosphorylase of Dechloromonas aromatica (strain RCB).